An 81-amino-acid chain; its full sequence is Serine protease inhibitor Kazal-type 2 (81 aa).

A signal peptide spans 1–21; it reads MALAVLRLALLLLAVTFAGPL. In terms of domain architecture, Kazal-like spans 27–81; it reads KYKTPFCARYQLPGCPRDFNPVCGTDMITYPNECTLCMKIRESGQNIKILRRGPC. 3 cysteine pairs are disulfide-bonded: C33-C63, C41-C60, and C49-C81.

More abundant in epididymis than in testis.

The protein resides in the secreted. The protein localises to the cytoplasmic vesicle. It is found in the secretory vesicle. Its subcellular location is the acrosome. Its function is as follows. Strong inhibitor of acrosin in male and/or female genital tract. Also inhibits trypsin. As a strong inhibitor of acrosin, it is required for normal spermiogenesis. It probably hinders premature activation of proacrosin and other proteases, thus preventing the cascade of events leading to spermiogenesis defects. May be involved in the regulation of serine protease-dependent germ cell apoptosis. It also inhibits trypsin. This chain is Serine protease inhibitor Kazal-type 2 (SPINK2), found in Macaca fascicularis (Crab-eating macaque).